The following is a 180-amino-acid chain: NAD(P)H-quinone oxidoreductase subunit I, chloroplastic (180 aa).

4Fe-4S ferredoxin-type domains lie at 55–84 and 95–124; these read GRIH…VDWR and LNYS…MTEE. [4Fe-4S] cluster contacts are provided by Cys-64, Cys-67, Cys-70, Cys-74, Cys-104, Cys-107, Cys-110, and Cys-114.

Belongs to the complex I 23 kDa subunit family. NDH is composed of at least 16 different subunits, 5 of which are encoded in the nucleus. It depends on [4Fe-4S] cluster as a cofactor.

It is found in the plastid. The protein resides in the chloroplast thylakoid membrane. The catalysed reaction is a plastoquinone + NADH + (n+1) H(+)(in) = a plastoquinol + NAD(+) + n H(+)(out). The enzyme catalyses a plastoquinone + NADPH + (n+1) H(+)(in) = a plastoquinol + NADP(+) + n H(+)(out). In terms of biological role, NDH shuttles electrons from NAD(P)H:plastoquinone, via FMN and iron-sulfur (Fe-S) centers, to quinones in the photosynthetic chain and possibly in a chloroplast respiratory chain. The immediate electron acceptor for the enzyme in this species is believed to be plastoquinone. Couples the redox reaction to proton translocation, and thus conserves the redox energy in a proton gradient. The protein is NAD(P)H-quinone oxidoreductase subunit I, chloroplastic of Oryza nivara (Indian wild rice).